Consider the following 639-residue polypeptide: Probable potassium transport system protein Kup 1 (639 aa).

12 consecutive transmembrane segments (helical) span residues 27 to 47 (AILG…LYAF), 64 to 84 (VIGL…FKYI), 115 to 135 (VLIV…MITP), 151 to 171 (PAMD…LFAI), 182 to 202 (FFGP…LIHI), 225 to 245 (GFYG…AEAL), 261 to 281 (WFCL…ALVL), 293 to 313 (LMFP…ATII), 351 to 371 (IYLP…VLTF), 377 to 397 (LATA…LMFF), 408 to 428 (IWLA…FLGA), and 430 to 450 (LLKI…FTVI).

The protein belongs to the HAK/KUP transporter (TC 2.A.72) family.

Its subcellular location is the cell inner membrane. It catalyses the reaction K(+)(in) + H(+)(in) = K(+)(out) + H(+)(out). Functionally, transport of potassium into the cell. Likely operates as a K(+):H(+) symporter. This is Probable potassium transport system protein Kup 1 from Agrobacterium fabrum (strain C58 / ATCC 33970) (Agrobacterium tumefaciens (strain C58)).